Consider the following 557-residue polypeptide: Polypyrimidine tract-binding protein 1 (557 aa).

Methionine 1 bears the N-acetylmethionine mark. Serine 16 bears the Phosphoserine mark. RRM domains are found at residues 59–143, 184–260, and 363–437; these read RVIH…SSPN, LRII…FSKL, and SVLL…LSKH. Lysine 65 participates in a covalent cross-link: Glycyl lysine isopeptide (Lys-Gly) (interchain with G-Cter in SUMO2). Phosphotyrosine is present on tyrosine 127. Threonine 138 is modified (phosphothreonine). The residue at position 141 (serine 141) is a Phosphoserine. A Glycyl lysine isopeptide (Lys-Gly) (interchain with G-Cter in SUMO2) cross-link involves residue lysine 218. A Phosphoserine modification is found at serine 459. The RRM 4 domain occupies 480 to 555; it reads ATLHLSNIPP…HHLRVSFSKS (76 aa).

Monomer. Part of a ternary complex containing KHSRP, PTBP1, PTBP2 and HNRPH1. Interacts with RAVER1 and SFPQ.

Its subcellular location is the nucleus. In terms of biological role, plays a role in pre-mRNA splicing and in the regulation of alternative splicing events. Activates exon skipping of its own pre-mRNA during muscle cell differentiation. Binds to the polypyrimidine tract of introns. May promote RNA looping when bound to two separate polypyrimidine tracts in the same pre-mRNA. May promote the binding of U2 snRNP to pre-mRNA. Cooperates with RAVER1 to modulate switching between mutually exclusive exons during maturation of the TPM1 pre-mRNA. Represses the splicing of MAPT/Tau exon 10. Binds to polypyrimidine-rich controlling element (PCE) of CFTR and promotes exon skipping of CFTR exon 9, thereby antagonizing TIA1 and its role in exon inclusion of CFTR exon 9. Plays a role in the splicing of pyruvate kinase PKM by binding repressively to a polypyrimidine tract flanking PKM exon 9, inhibiting exon 9 inclusion and resulting in exon 10 inclusion and production of the PKM M2 isoform. The chain is Polypyrimidine tract-binding protein 1 (PTBP1) from Sus scrofa (Pig).